The sequence spans 157 residues: Ribosomal RNA large subunit methyltransferase H (157 aa).

S-adenosyl-L-methionine contacts are provided by residues L74, G106, and 125-130; that span reads LSDMTL.

It belongs to the RNA methyltransferase RlmH family. Homodimer.

Its subcellular location is the cytoplasm. It carries out the reaction pseudouridine(1915) in 23S rRNA + S-adenosyl-L-methionine = N(3)-methylpseudouridine(1915) in 23S rRNA + S-adenosyl-L-homocysteine + H(+). In terms of biological role, specifically methylates the pseudouridine at position 1915 (m3Psi1915) in 23S rRNA. This Desulfovibrio desulfuricans (strain ATCC 27774 / DSM 6949 / MB) protein is Ribosomal RNA large subunit methyltransferase H.